A 418-amino-acid chain; its full sequence is Gamma-glutamyl phosphate reductase (418 aa).

Belongs to the gamma-glutamyl phosphate reductase family.

It is found in the cytoplasm. It catalyses the reaction L-glutamate 5-semialdehyde + phosphate + NADP(+) = L-glutamyl 5-phosphate + NADPH + H(+). It functions in the pathway amino-acid biosynthesis; L-proline biosynthesis; L-glutamate 5-semialdehyde from L-glutamate: step 2/2. Catalyzes the NADPH-dependent reduction of L-glutamate 5-phosphate into L-glutamate 5-semialdehyde and phosphate. The product spontaneously undergoes cyclization to form 1-pyrroline-5-carboxylate. This chain is Gamma-glutamyl phosphate reductase, found in Geotalea daltonii (strain DSM 22248 / JCM 15807 / FRC-32) (Geobacter daltonii).